A 244-amino-acid chain; its full sequence is Uridylate kinase (244 aa).

15-18 (KLSG) is a binding site for ATP. The interval 23–28 (GSEGFG) is involved in allosteric activation by GTP. Gly57 provides a ligand contact to UMP. ATP-binding residues include Gly58 and Arg62. UMP-binding positions include Asp77 and 138 to 145 (TGNPFFTT). Residues Thr165, Phe171, and Asp174 each coordinate ATP.

It belongs to the UMP kinase family. In terms of assembly, homohexamer.

The protein localises to the cytoplasm. The catalysed reaction is UMP + ATP = UDP + ADP. Its pathway is pyrimidine metabolism; CTP biosynthesis via de novo pathway; UDP from UMP (UMPK route): step 1/1. Its activity is regulated as follows. Allosterically activated by GTP. Inhibited by UTP. Its function is as follows. Catalyzes the reversible phosphorylation of UMP to UDP. The sequence is that of Uridylate kinase from Aeromonas hydrophila subsp. hydrophila (strain ATCC 7966 / DSM 30187 / BCRC 13018 / CCUG 14551 / JCM 1027 / KCTC 2358 / NCIMB 9240 / NCTC 8049).